A 362-amino-acid chain; its full sequence is 3-dehydroquinate synthase (362 aa).

NAD(+) is bound by residues 74 to 79 (DGEGYK), 108 to 112 (GVIGD), 132 to 133 (TT), K145, K154, and 172 to 175 (TLDT). Zn(2+) is bound by residues E187, H250, and H267.

Belongs to the sugar phosphate cyclases superfamily. Dehydroquinate synthase family. It depends on Co(2+) as a cofactor. The cofactor is Zn(2+). NAD(+) serves as cofactor.

The protein resides in the cytoplasm. It carries out the reaction 7-phospho-2-dehydro-3-deoxy-D-arabino-heptonate = 3-dehydroquinate + phosphate. It functions in the pathway metabolic intermediate biosynthesis; chorismate biosynthesis; chorismate from D-erythrose 4-phosphate and phosphoenolpyruvate: step 2/7. In terms of biological role, catalyzes the conversion of 3-deoxy-D-arabino-heptulosonate 7-phosphate (DAHP) to dehydroquinate (DHQ). The sequence is that of 3-dehydroquinate synthase from Geobacter sp. (strain M21).